The primary structure comprises 98 residues: Large ribosomal subunit protein mL53 (98 aa).

Belongs to the mitochondrion-specific ribosomal protein mL53 family. In terms of assembly, component of the mitochondrial large ribosomal subunit (mt-LSU). Mature yeast 74S mitochondrial ribosomes consist of a small (37S) and a large (54S) subunit. The 37S small subunit contains a 15S ribosomal RNA (15S mt-rRNA) and 34 different proteins. The 54S large subunit contains a 21S rRNA (21S mt-rRNA) and 46 different proteins.

Its subcellular location is the mitochondrion. Component of the mitochondrial ribosome (mitoribosome), a dedicated translation machinery responsible for the synthesis of mitochondrial genome-encoded proteins, including at least some of the essential transmembrane subunits of the mitochondrial respiratory chain. The mitoribosomes are attached to the mitochondrial inner membrane and translation products are cotranslationally integrated into the membrane. This Saccharomyces cerevisiae (strain ATCC 204508 / S288c) (Baker's yeast) protein is Large ribosomal subunit protein mL53 (MRPL44).